A 339-amino-acid chain; its full sequence is DNA-directed RNA polymerase subunit alpha (339 aa).

Residues 1–235 are alpha N-terminal domain (alpha-NTD); it reads MTIQKNWQEL…DQLNVFVNFE (235 aa). The interval 251-339 is alpha C-terminal domain (alpha-CTD); it reads FNPAFLKKVD…ELAKRFEDHY (89 aa).

Belongs to the RNA polymerase alpha chain family. In terms of assembly, homodimer. The RNAP catalytic core consists of 2 alpha, 1 beta, 1 beta' and 1 omega subunit. When a sigma factor is associated with the core the holoenzyme is formed, which can initiate transcription.

The catalysed reaction is RNA(n) + a ribonucleoside 5'-triphosphate = RNA(n+1) + diphosphate. Its function is as follows. DNA-dependent RNA polymerase catalyzes the transcription of DNA into RNA using the four ribonucleoside triphosphates as substrates. This chain is DNA-directed RNA polymerase subunit alpha, found in Rhodopseudomonas palustris (strain BisA53).